The sequence spans 43 residues: Probable intron-encoded DNA endonuclease 2 (43 aa).

The protein belongs to the LAGLIDADG endonuclease family.

It localises to the mitochondrion. In terms of biological role, mitochondrial DNA endonuclease involved in intron homing. The chain is Probable intron-encoded DNA endonuclease 2 (hegI2) from Mycosarcoma maydis (Corn smut fungus).